A 216-amino-acid chain; its full sequence is NKG2-D type II integral membrane protein (216 aa).

Over 1-51 the chain is Cytoplasmic; that stretch reads MGWIRGRRSRHSWEMSEFHNYNLDLKKSDFSTRWQKQRCPVVKSKCRENAS. A helical; Signal-anchor for type II membrane protein membrane pass occupies residues 52–72; the sequence is PFFFCCFIAVAMGIRFIIMVT. Over 73–216 the chain is Extracellular; the sequence is IWSAVFLNSL…NTYICMQRTV (144 aa). 4 cysteine pairs are disulfide-bonded: C96/C105, C99/C110, C127/C211, and C189/C203. One can recognise a C-type lectin domain in the interval 98-213; sequence PCPKNWICYK…STPNTYICMQ (116 aa). N-linked (GlcNAc...) asparagine glycans are attached at residues N131, N163, and N202.

As to quaternary structure, homodimer; disulfide-linked. Heterohexamer composed of two subunits of KLRK1 and four subunits of HCST/DAP10. Interacts (via transmembrane domain) with HCST/DAP10 (via transmembrane domain); the interaction is required for KLRK1 NK cell surface and induces NK cell-mediated cytotoxicity. Does not interact with TYROBP. Interacts with CEACAM1; recruits PTPN6 that dephosphorylates VAV1. As to expression, expressed in natural killer (NK) cells, CD8(+) alpha-beta and gamma-delta T-cells. Expressed on essentially all CD56+CD3- NK cells from freshly isolated PBMC. Expressed in interferon-producing killer dendritic cells (IKDCs).

It localises to the cell membrane. In terms of biological role, functions as an activating and costimulatory receptor involved in immunosurveillance upon binding to various cellular stress-inducible ligands displayed at the surface of autologous tumor cells and virus-infected cells. Provides both stimulatory and costimulatory innate immune responses on activated killer (NK) cells, leading to cytotoxic activity. Acts as a costimulatory receptor for T-cell receptor (TCR) in CD8(+) T-cell-mediated adaptive immune responses by amplifying T-cell activation. Stimulates perforin-mediated elimination of ligand-expressing tumor cells. Signaling involves calcium influx, culminating in the expression of TNF-alpha. Participates in NK cell-mediated bone marrow graft rejection. May play a regulatory role in differentiation and survival of NK cells. Binds to ligands belonging to various subfamilies of MHC class I-related glycoproteins including MICA, MICB, RAET1E, RAET1G, RAET1L/ULBP6, ULBP1, ULBP2, ULBP3 (ULBP2&gt;ULBP1&gt;ULBP3) and ULBP4. The protein is NKG2-D type II integral membrane protein (KLRK1) of Homo sapiens (Human).